Consider the following 411-residue polypeptide: L-cysteine:1D-myo-inositol 2-amino-2-deoxy-alpha-D-glucopyranoside ligase (411 aa).

Position 43 (Cys43) interacts with Zn(2+). L-cysteinyl-5'-AMP is bound by residues 43-46, Thr58, and 81-83; these read CGIT and NVT. Residues 45-55 carry the 'HIGH' region motif; sequence ITPYDATHLGH. The short motif at 186 to 191 is the 'ERGGDP' region element; sequence QRGGDP. Trp226 lines the L-cysteinyl-5'-AMP pocket. Cys230 provides a ligand contact to Zn(2+). L-cysteinyl-5'-AMP is bound at residue 248-250; the sequence is GSD. His255 is a binding site for Zn(2+). Position 282 (Ile282) interacts with L-cysteinyl-5'-AMP. The short motif at 288-292 is the 'KMSKS' region element; that stretch reads KMSKS.

Belongs to the class-I aminoacyl-tRNA synthetase family. MshC subfamily. Monomer. Zn(2+) serves as cofactor.

It catalyses the reaction 1D-myo-inositol 2-amino-2-deoxy-alpha-D-glucopyranoside + L-cysteine + ATP = 1D-myo-inositol 2-(L-cysteinylamino)-2-deoxy-alpha-D-glucopyranoside + AMP + diphosphate + H(+). In terms of biological role, catalyzes the ATP-dependent condensation of GlcN-Ins and L-cysteine to form L-Cys-GlcN-Ins. This is L-cysteine:1D-myo-inositol 2-amino-2-deoxy-alpha-D-glucopyranoside ligase from Mycobacterium ulcerans (strain Agy99).